Here is a 102-residue protein sequence, read N- to C-terminus: NADH-quinone oxidoreductase subunit K (102 aa).

Helical transmembrane passes span 6-26, 30-50, and 63-83; these read LIAMMILAAGLFAIGLFGVLA, IMFQLVALEVALSGPALGFVA, and MFILVLTLAAAEVAVGLALFL.

Belongs to the complex I subunit 4L family. NDH-1 is composed of 14 different subunits. Subunits NuoA, H, J, K, L, M, N constitute the membrane sector of the complex.

Its subcellular location is the cell inner membrane. The enzyme catalyses a quinone + NADH + 5 H(+)(in) = a quinol + NAD(+) + 4 H(+)(out). Functionally, NDH-1 shuttles electrons from NADH, via FMN and iron-sulfur (Fe-S) centers, to quinones in the respiratory chain. The immediate electron acceptor for the enzyme in this species is believed to be ubiquinone. Couples the redox reaction to proton translocation (for every two electrons transferred, four hydrogen ions are translocated across the cytoplasmic membrane), and thus conserves the redox energy in a proton gradient. This is NADH-quinone oxidoreductase subunit K from Rhodopseudomonas palustris (strain BisB5).